Reading from the N-terminus, the 537-residue chain is MDCKVVSLNEKDQFIPKIKSSDPVITGLFQYDAAQQTSFEKRMSKENNGREAALANVIREYMSDLKLSSEQELNIQHLANGSKVVIGGQQAGLFGGPLYTFHKIFSIITLSKELTDTHKQQVVPVFWIAGEDHDFDEVNHTFVYNENHGSLHKVKYHTMEMPETTVSRYYPDKAELKQTLKTMFIHMKETVHTQGLLEICDRIIDQYDSWTDMFKALLHETFKAYGVLFIDAQFEPLRKMEAPMFKKILKKHQLLDDAFRATQQRTQNQGLNAMIQTDTNVHLFLHDENMRQLVSYDGKHFKLNKTDKTYIKEEIINIAENQPELFSNNVVTRPLMEEWLFNTVAFVGGPSEIKYWAELKDVFELFDVEMPIVMPRLRITYLNDRIEKLLSKYNIPLEKVLVDGVEGERSKFIREQASHQFIEKVEGMIEQQRRLNKDLLDEVAGNQNNINLVNKNNEIHIQQYDYLLKRYLLNIERENDISMKQFREIQETLHPMGGLQERIWNLLQILNDFGTDVFKPSTYPPLSYTFDHIIIKP.

Residues 422-450 adopt a coiled-coil conformation; sequence IEKVEGMIEQQRRLNKDLLDEVAGNQNNI.

The protein belongs to the BshC family.

Functionally, involved in bacillithiol (BSH) biosynthesis. May catalyze the last step of the pathway, the addition of cysteine to glucosamine malate (GlcN-Mal) to generate BSH. This Staphylococcus aureus (strain COL) protein is Putative cysteine ligase BshC.